We begin with the raw amino-acid sequence, 417 residues long: Probable sugar-binding periplasmic protein (417 aa).

Positions 1–21 are cleaved as a signal peptide; it reads MLRKLLIGTALATSFAFSAHA.

The protein belongs to the bacterial solute-binding protein 1 family.

It localises to the periplasm. Functionally, part of a binding-protein-dependent transport system for a sugar. This Mesorhizobium japonicum (strain LMG 29417 / CECT 9101 / MAFF 303099) (Mesorhizobium loti (strain MAFF 303099)) protein is Probable sugar-binding periplasmic protein.